We begin with the raw amino-acid sequence, 501 residues long: Cytochrome P450 6j1 (501 aa).

Residue Cys-444 participates in heme binding.

This sequence belongs to the cytochrome P450 family. Heme serves as cofactor.

The protein resides in the endoplasmic reticulum membrane. It is found in the microsome membrane. The polypeptide is Cytochrome P450 6j1 (CYP6J1) (Blattella germanica (German cockroach)).